Consider the following 782-residue polypeptide: Lysosome membrane protein 2-C (782 aa).

Residues 1–7 (MVANNKG) are Cytoplasmic-facing. The helical transmembrane segment at 8–28 (LLIAGLLLSVIGAALFVISLA) threads the bilayer. The Lumenal portion of the chain corresponds to 29 to 739 (LLPSVLNVAT…QQFKQIQTVK (711 aa)). N-linked (GlcNAc...) asparagine glycosylation is found at asparagine 77, asparagine 105, asparagine 191, asparagine 219, asparagine 234, asparagine 243, asparagine 281, asparagine 368, asparagine 387, asparagine 401, asparagine 427, asparagine 432, asparagine 451, asparagine 465, asparagine 501, asparagine 536, asparagine 540, asparagine 595, asparagine 605, asparagine 613, asparagine 646, and asparagine 692. A helical membrane pass occupies residues 740-760 (IAPVVVVSIFGGILLIAGLVM). The Cytoplasmic portion of the chain corresponds to 761–782 (AINGFRKTFYNNNQYNGYNIIN). The Tyrosine-type lysosomal sorting signal motif lies at 777-781 (GYNII).

It belongs to the CD36 family. In terms of processing, heavily glycosylated.

It localises to the lysosome membrane. Its function is as follows. May act as a lysosomal receptor. May be involved role in macropinocytosis and fluid phase exocytosis. This chain is Lysosome membrane protein 2-C (lmpC), found in Dictyostelium discoideum (Social amoeba).